The following is a 569-amino-acid chain: Proline--tRNA ligase (569 aa).

It belongs to the class-II aminoacyl-tRNA synthetase family. ProS type 1 subfamily. As to quaternary structure, homodimer.

The protein localises to the cytoplasm. The enzyme catalyses tRNA(Pro) + L-proline + ATP = L-prolyl-tRNA(Pro) + AMP + diphosphate. Catalyzes the attachment of proline to tRNA(Pro) in a two-step reaction: proline is first activated by ATP to form Pro-AMP and then transferred to the acceptor end of tRNA(Pro). As ProRS can inadvertently accommodate and process non-cognate amino acids such as alanine and cysteine, to avoid such errors it has two additional distinct editing activities against alanine. One activity is designated as 'pretransfer' editing and involves the tRNA(Pro)-independent hydrolysis of activated Ala-AMP. The other activity is designated 'posttransfer' editing and involves deacylation of mischarged Ala-tRNA(Pro). The misacylated Cys-tRNA(Pro) is not edited by ProRS. This Latilactobacillus sakei subsp. sakei (strain 23K) (Lactobacillus sakei subsp. sakei) protein is Proline--tRNA ligase.